A 535-amino-acid polypeptide reads, in one-letter code: CTP synthase (535 aa).

Residues 1 to 268 form an amidoligase domain region; that stretch reads MSTKYIFVTG…DQIVCDHLKL (268 aa). S14 contributes to the CTP binding site. S14 is a UTP binding site. 15-20 contacts ATP; sequence SMGKGI. Y55 is a binding site for L-glutamine. ATP is bound at residue D72. The Mg(2+) site is built by D72 and E142. CTP-binding positions include 149–151, 189–194, and K225; these read DME and KTKIAQ. UTP is bound by residues 189 to 194 and K225; that span reads KTKIAQ. Residues 293–535 enclose the Glutamine amidotransferase type-1 domain; that stretch reads KIALVGKYVE…FIRVAVENSK (243 aa). Residue G355 participates in L-glutamine binding. The active-site Nucleophile; for glutamine hydrolysis is the C382. L-glutamine-binding positions include 383–386, E406, and R464; that span reads LGMQ. Catalysis depends on residues H509 and E511.

It belongs to the CTP synthase family. Homotetramer.

It catalyses the reaction UTP + L-glutamine + ATP + H2O = CTP + L-glutamate + ADP + phosphate + 2 H(+). It carries out the reaction L-glutamine + H2O = L-glutamate + NH4(+). The catalysed reaction is UTP + NH4(+) + ATP = CTP + ADP + phosphate + 2 H(+). Its pathway is pyrimidine metabolism; CTP biosynthesis via de novo pathway; CTP from UDP: step 2/2. With respect to regulation, allosterically activated by GTP, when glutamine is the substrate; GTP has no effect on the reaction when ammonia is the substrate. The allosteric effector GTP functions by stabilizing the protein conformation that binds the tetrahedral intermediate(s) formed during glutamine hydrolysis. Inhibited by the product CTP, via allosteric rather than competitive inhibition. Catalyzes the ATP-dependent amination of UTP to CTP with either L-glutamine or ammonia as the source of nitrogen. Regulates intracellular CTP levels through interactions with the four ribonucleotide triphosphates. This is CTP synthase from Lactococcus lactis subsp. lactis (strain IL1403) (Streptococcus lactis).